Reading from the N-terminus, the 118-residue chain is Class I hydrophobin hum2 (118 aa).

The signal sequence occupies residues 1–19 (MQFKTIFATLAAFAAVASA). 4 disulfide bridges follow: cysteine 33-cysteine 98, cysteine 40-cysteine 92, cysteine 41-cysteine 74, and cysteine 99-cysteine 112.

It belongs to the fungal hydrophobin family. Self-assembles to form functional amyloid fibrils called rodlets. Self-assembly into fibrillar rodlets occurs spontaneously at hydrophobic:hydrophilic interfaces and the rodlets further associate laterally to form amphipathic monolayers.

Its subcellular location is the secreted. The protein localises to the cell wall. In terms of biological role, aerial growth, conidiation, and dispersal of filamentous fungi in the environment rely upon a capability of their secreting small amphipathic proteins called hydrophobins (HPBs) with low sequence identity. Class I can self-assemble into an outermost layer of rodlet bundles on aerial cell surfaces, conferring cellular hydrophobicity that supports fungal growth, development and dispersal; whereas Class II form highly ordered films at water-air interfaces through intermolecular interactions but contribute nothing to the rodlet structure. Hum2 is a class I hydrophobin which that plays a role in, but seems not to be crucial for the formation of aerial hyphae. Hydrophobins of Mycosarcoma maydis have been functionally replaced, at least partially, by repellents. This Mycosarcoma maydis (Corn smut fungus) protein is Class I hydrophobin hum2.